The following is a 389-amino-acid chain: Lipid-A-disaccharide synthase (389 aa).

This sequence belongs to the LpxB family.

The enzyme catalyses a lipid X + a UDP-2-N,3-O-bis[(3R)-3-hydroxyacyl]-alpha-D-glucosamine = a lipid A disaccharide + UDP + H(+). The protein operates within bacterial outer membrane biogenesis; LPS lipid A biosynthesis. Functionally, condensation of UDP-2,3-diacylglucosamine and 2,3-diacylglucosamine-1-phosphate to form lipid A disaccharide, a precursor of lipid A, a phosphorylated glycolipid that anchors the lipopolysaccharide to the outer membrane of the cell. This chain is Lipid-A-disaccharide synthase, found in Burkholderia ambifaria (strain MC40-6).